The chain runs to 204 residues: Large ribosomal subunit protein bL25 (204 aa).

Ser123 carries the post-translational modification Phosphoserine.

It belongs to the bacterial ribosomal protein bL25 family. CTC subfamily. As to quaternary structure, part of the 50S ribosomal subunit; part of the 5S rRNA/L5/L18/L25 subcomplex. Contacts the 5S rRNA. Binds to the 5S rRNA independently of L5 and L18.

In terms of biological role, this is one of the proteins that binds to the 5S RNA in the ribosome where it forms part of the central protuberance. This is Large ribosomal subunit protein bL25 from Pseudomonas aeruginosa (strain UCBPP-PA14).